Consider the following 235-residue polypeptide: Urease accessory protein UreF (235 aa).

Belongs to the UreF family. As to quaternary structure, ureD, UreF and UreG form a complex that acts as a GTP-hydrolysis-dependent molecular chaperone, activating the urease apoprotein by helping to assemble the nickel containing metallocenter of UreC. The UreE protein probably delivers the nickel.

It is found in the cytoplasm. In terms of biological role, required for maturation of urease via the functional incorporation of the urease nickel metallocenter. The polypeptide is Urease accessory protein UreF (Haemophilus influenzae (strain PittGG)).